A 265-amino-acid polypeptide reads, in one-letter code: Small ribosomal subunit protein uS2 (265 aa).

Positions 226–265 are disordered; that stretch reads AAAPNSASVREEEFSADAADEGKGRRAPAKKGDKKADAAE. Residues 245–265 show a composition bias toward basic and acidic residues; the sequence is DEGKGRRAPAKKGDKKADAAE.

This sequence belongs to the universal ribosomal protein uS2 family.

The chain is Small ribosomal subunit protein uS2 from Xanthomonas axonopodis pv. citri (strain 306).